The following is a 289-amino-acid chain: Splicing factor C9orf78 homolog (289 aa).

Basic residues predominate over residues Met1 to Arg12. Disordered regions lie at residues Met1 to Val27 and Gly86 to Arg109. The interval Arg5 to Val58 is interaction with SNRNP200. 2 positions are modified to phosphoserine: Ser15 and Ser17. The residue at position 147 (Tyr147) is a Phosphotyrosine. The segment covering Leu232–Lys283 has biased composition (basic and acidic residues). The segment at Leu232–Tyr289 is disordered. Thr253 is modified (phosphothreonine). Ser261 bears the Phosphoserine mark.

Belongs to the TLS1 family. Component of the spliceosome. Interacts with SNRNP200; the interaction is direct. Interacts with PRPF8.

The protein localises to the nucleus. It localises to the chromosome. It is found in the centromere. Functionally, plays a role in pre-mRNA splicing by promoting usage of the upstream 3'-splice site at alternative NAGNAG splice sites; these are sites featuring alternative acceptor motifs separated by only a few nucleotides. May also modulate exon inclusion events. Plays a role in spliceosomal remodeling by displacing WBP4 from SNRNP200 and may act to inhibit SNRNP200 helicase activity. Binds U5 snRNA. Required for proper chromosome segregation. Not required for splicing of shelterin components. This Pongo abelii (Sumatran orangutan) protein is Splicing factor C9orf78 homolog.